We begin with the raw amino-acid sequence, 85 residues long: Transcription factor 4 (85 aa).

Residues 7-60 (ERRMANNARERLRVRDINEAFKELGRMVQLHLKSDKPQTKLLILHQAVAVILSL) form the bHLH domain. Residues 62–85 (QQVRERNLNPKAACLKRREEEKVS) form a class A specific domain region.

In terms of assembly, efficient DNA binding requires dimerization with another bHLH protein. Forms homo- or heterooligomers with myogenin.

It is found in the nucleus. In terms of biological role, transcription factor that binds to the immunoglobulin enhancer Mu-E5/KE5-motif. Involved in the initiation of neuronal differentiation. Binds to the E-box present in the somatostatin receptor 2 initiator element (SSTR2-INR) to activate transcription. The polypeptide is Transcription factor 4 (TCF4) (Gallus gallus (Chicken)).